Here is a 663-residue protein sequence, read N- to C-terminus: UvrABC system protein B (663 aa).

A Helicase ATP-binding domain is found at 31–418 (DNIEGGEKAQ…TDTVVEQIIR (388 aa)). An ATP-binding site is contributed by 44-51 (GATGTGKT). The Beta-hairpin motif lies at 97 to 120 (YYDYYQPEAYVPSSDTYIEKDSSV). Residues 435-601 (QMDDLLGEIN…TIKKEIRDLI (167 aa)) form the Helicase C-terminal domain. The region spanning 627–662 (QAEIKALQQQMQEAAELLDFELAAQIRDVILELKAI) is the UVR domain.

The protein belongs to the UvrB family. As to quaternary structure, forms a heterotetramer with UvrA during the search for lesions. Interacts with UvrC in an incision complex.

It is found in the cytoplasm. The UvrABC repair system catalyzes the recognition and processing of DNA lesions. A damage recognition complex composed of 2 UvrA and 2 UvrB subunits scans DNA for abnormalities. Upon binding of the UvrA(2)B(2) complex to a putative damaged site, the DNA wraps around one UvrB monomer. DNA wrap is dependent on ATP binding by UvrB and probably causes local melting of the DNA helix, facilitating insertion of UvrB beta-hairpin between the DNA strands. Then UvrB probes one DNA strand for the presence of a lesion. If a lesion is found the UvrA subunits dissociate and the UvrB-DNA preincision complex is formed. This complex is subsequently bound by UvrC and the second UvrB is released. If no lesion is found, the DNA wraps around the other UvrB subunit that will check the other stand for damage. The chain is UvrABC system protein B from Streptococcus agalactiae serotype III (strain NEM316).